The following is a 124-amino-acid chain: Fluoride-specific ion channel FluC 2 (124 aa).

4 helical membrane passes run M1 to T21, S36 to G58, V63 to T85, and L104 to F124. Na(+) is bound by residues G75 and T78.

The protein belongs to the fluoride channel Fluc/FEX (TC 1.A.43) family. Heterodimer composed of FluC1 and FluC2. Neither FluC1 nor FluC2 alone catalyzes fluoride efflux from liposomes.

Its subcellular location is the cell membrane. The enzyme catalyses fluoride(in) = fluoride(out). Na(+) is not transported, but it plays an essential structural role and its presence is essential for fluoride channel function. In terms of biological role, fluoride-specific ion channel. Important for reducing fluoride concentration in the cell, thus reducing its toxicity. This chain is Fluoride-specific ion channel FluC 2, found in Lactobacillus acidophilus (strain ATCC 700396 / NCK56 / N2 / NCFM).